Here is a 490-residue protein sequence, read N- to C-terminus: Probable cytochrome P450 518B1 (490 aa).

A helical membrane pass occupies residues 2–22; the sequence is LTNIIILIILYLFYDFCYKNF. Cys437 is a heme binding site.

The protein belongs to the cytochrome P450 family. The cofactor is heme.

The protein localises to the membrane. The sequence is that of Probable cytochrome P450 518B1 (cyp518B1) from Dictyostelium discoideum (Social amoeba).